A 405-amino-acid chain; its full sequence is Palmitoyltransferase PFA5 (405 aa).

The next 5 helical transmembrane spans lie at Tyr12 to Ile32, Ile51 to Ile71, Leu154 to Cys174, Phe191 to Ile211, and Phe310 to Ile330. The DHHC domain maps to Tyr111–Met161.

Belongs to the DHHC palmitoyltransferase family. PFA5 subfamily. Post-translationally, autopalmitoylated.

It is found in the membrane. It carries out the reaction L-cysteinyl-[protein] + hexadecanoyl-CoA = S-hexadecanoyl-L-cysteinyl-[protein] + CoA. The polypeptide is Palmitoyltransferase PFA5 (PFA5) (Candida albicans (strain SC5314 / ATCC MYA-2876) (Yeast)).